The chain runs to 101 residues: NAD(P)H-quinone oxidoreductase subunit 4L, chloroplastic (101 aa).

Transmembrane regions (helical) follow at residues 2–22 (MLEHVLVLSAYLFSIGIYGLI), 32–52 (MCLELILNAVNMNLVTFSDLF), and 61–81 (IFSIFVIAIAAAEAAIGPAIV).

The protein belongs to the complex I subunit 4L family. NDH is composed of at least 16 different subunits, 5 of which are encoded in the nucleus.

Its subcellular location is the plastid. The protein localises to the chloroplast thylakoid membrane. It catalyses the reaction a plastoquinone + NADH + (n+1) H(+)(in) = a plastoquinol + NAD(+) + n H(+)(out). The catalysed reaction is a plastoquinone + NADPH + (n+1) H(+)(in) = a plastoquinol + NADP(+) + n H(+)(out). In terms of biological role, NDH shuttles electrons from NAD(P)H:plastoquinone, via FMN and iron-sulfur (Fe-S) centers, to quinones in the photosynthetic chain and possibly in a chloroplast respiratory chain. The immediate electron acceptor for the enzyme in this species is believed to be plastoquinone. Couples the redox reaction to proton translocation, and thus conserves the redox energy in a proton gradient. The protein is NAD(P)H-quinone oxidoreductase subunit 4L, chloroplastic of Nymphaea alba (White water-lily).